We begin with the raw amino-acid sequence, 874 residues long: Alanine--tRNA ligase (874 aa).

Zn(2+) is bound by residues H562, H566, C665, and H669.

The protein belongs to the class-II aminoacyl-tRNA synthetase family. It depends on Zn(2+) as a cofactor.

It localises to the cytoplasm. The enzyme catalyses tRNA(Ala) + L-alanine + ATP = L-alanyl-tRNA(Ala) + AMP + diphosphate. Catalyzes the attachment of alanine to tRNA(Ala) in a two-step reaction: alanine is first activated by ATP to form Ala-AMP and then transferred to the acceptor end of tRNA(Ala). Also edits incorrectly charged Ser-tRNA(Ala) and Gly-tRNA(Ala) via its editing domain. The chain is Alanine--tRNA ligase from Pseudomonas syringae pv. syringae (strain B728a).